A 275-amino-acid chain; its full sequence is Trypsin-3 (275 aa).

The N-terminal stretch at 1-22 is a signal peptide; that stretch reads MISNKIAILLAVLVVAVACAQA. The propeptide at 23–48 is activation peptide; it reads RVALKHRSVQALPRFLPRPKYDVGHR. Positions 49–274 constitute a Peptidase S1 domain; sequence IVGGFEIDVS…VRDWVRENSG (226 aa). Residues Cys74 and Cys90 are joined by a disulfide bond. Active-site charge relay system residues include His89 and Asp134. 2 disulfide bridges follow: Cys199/Cys215 and Cys226/Cys250. Residue Ser230 is the Charge relay system of the active site.

Belongs to the peptidase S1 family. Expressed in the midgut. Expression levels drop a few hours after blood feeding and pick up again 28 hours later.

It is found in the secreted. It carries out the reaction Preferential cleavage: Arg-|-Xaa, Lys-|-Xaa.. Functionally, constitutive trypsin that is expressed 2 days after emergence, coinciding with host seeking behavior of the female. The polypeptide is Trypsin-3 (TRYP3) (Anopheles gambiae (African malaria mosquito)).